Consider the following 591-residue polypeptide: V-type ATP synthase alpha chain (591 aa).

232-239 (GPFGAGKT) is an ATP binding site.

Belongs to the ATPase alpha/beta chains family.

It carries out the reaction ATP + H2O + 4 H(+)(in) = ADP + phosphate + 5 H(+)(out). In terms of biological role, produces ATP from ADP in the presence of a proton gradient across the membrane. The V-type alpha chain is a catalytic subunit. The chain is V-type ATP synthase alpha chain from Clostridium perfringens (strain ATCC 13124 / DSM 756 / JCM 1290 / NCIMB 6125 / NCTC 8237 / Type A).